We begin with the raw amino-acid sequence, 422 residues long: Protein IQ-DOMAIN 5 (422 aa).

The Nuclear localization signal motif lies at Ser23–Lys30. 3 IQ domains span residues Glu87–Arg115, Leu116–Ala138, and Leu139–Gln164. Residues Gln137–Val151 form a calmodulin-binding region. The tract at residues Gly269 to Ala422 is disordered. The segment covering Met273–Cys308 has biased composition (polar residues). Positions Ser310–Ser327 are enriched in low complexity. Over residues Asn355–Leu371 the composition is skewed to basic and acidic residues. Over residues Leu373 to Ala387 the composition is skewed to polar residues. Residues Arg412–Ala422 are compositionally biased toward basic and acidic residues.

The protein belongs to the IQD family. As to quaternary structure, binds to multiple calmodulin (CaM) in the presence of Ca(2+) and CaM-like proteins. As to expression, expressed mostly in vegetative tissues including older parts of the root, cotyledons, leaves and shoot apical meristems (SAM). Present at low levels in pollen, siliques and seeds.

It is found in the nucleus. Its subcellular location is the cytoplasm. The protein localises to the cytoskeleton. The protein resides in the spindle. It localises to the phragmoplast. In terms of biological role, may be involved in cooperative interactions with calmodulins or calmodulin-like proteins. Recruits calmodulin (CaM) calcium sensor proteins to cortical microtubule arrays, thus being a potential scaffold in cellular signaling and trafficking. Binds to microtubules (MTs) and promotes MT assembly and dynamics to modulate pavement cell (PC) morphogenesis via cellulose deposition-dependent anisotropic cell expansion triggered by cellulose synthase complexes (CSCs). May associate with nucleic acids and regulate gene expression at the transcriptional or post-transcriptional level. The protein is Protein IQ-DOMAIN 5 of Arabidopsis thaliana (Mouse-ear cress).